We begin with the raw amino-acid sequence, 322 residues long: 3-hydroxyacyl-CoA dehydrogenase FVEG_12628 (322 aa).

A helical membrane pass occupies residues 5 to 25 (IRTVAIVGCGVIGMGWAVLFL). The active-site For hydroxyacyl-coenzyme A dehydrogenase activity is the glutamate 151.

The protein belongs to the 3-hydroxyacyl-CoA dehydrogenase family.

Its subcellular location is the membrane. Functionally, 3-hydroxyacyl-CoA dehydrogenase; part of the Fusarium detoxification of benzoxazolinone cluster 2 (FDB2) involved in the degradation of benzoxazolinones produced by the host plant. Maize, wheat, and rye produce the 2 benzoxazinone phytoanticipins 2,4-dihy-droxy-7-methoxy-1,4-benzoxazin-3-one (DIMBOA) and 2,4-dihydroxy-1,4-benzoxazin-3-one (DIBOA) that, due to their inherent instability once released, spontaneously degrade to the more stable corresponding benzoxazolinones, 6-methoxy-2-benzoxazolinone (MBOA) and 2-benzoxazolinone (BOA), respectively. The first step in the detoxification of benzoxazolinones involves the hydrolysis of the cyclic ester bond of benzoxazolinones by the FDB1 cluster gamma-lactamase MBL1 to aminophenols. MBL1 is able to convert BOA into 2-aminophenol (2-AP), as well as MBOA into 5-methoxy-2-aminophenol (2-AMP). The FDB2 cluster N-malonyltransferase FDB2/NAT1 then metabolizes aminophenols via N-malonylation to non-toxic malonamic acids. FDB2/NAT1 converts 2-AP into N-(2-hydroxyphenyl) malonamic acid (HPMA) and 2-AMP into N-(2-hydroxy-4-methoxyphenyl) malonamic acid (HMPMA). The duplicated dienlactone hydrolases DLH1 and DLH2 may provide redundant function for hydrolyzing the lactone moiety in the BOA molecule. The roles of the amidases an other enzymes encoded by the 2 FDB clusters have not been identified so far. The sequence is that of 3-hydroxyacyl-CoA dehydrogenase FVEG_12628 from Gibberella moniliformis (strain M3125 / FGSC 7600) (Maize ear and stalk rot fungus).